The chain runs to 141 residues: Nucleoside diphosphate kinase (141 aa).

ATP is bound by residues lysine 11, phenylalanine 59, arginine 87, threonine 93, arginine 104, and asparagine 114. The active-site Pros-phosphohistidine intermediate is histidine 117.

The protein belongs to the NDK family. Homotetramer. The cofactor is Mg(2+).

The protein localises to the cytoplasm. It carries out the reaction a 2'-deoxyribonucleoside 5'-diphosphate + ATP = a 2'-deoxyribonucleoside 5'-triphosphate + ADP. The enzyme catalyses a ribonucleoside 5'-diphosphate + ATP = a ribonucleoside 5'-triphosphate + ADP. Functionally, major role in the synthesis of nucleoside triphosphates other than ATP. The ATP gamma phosphate is transferred to the NDP beta phosphate via a ping-pong mechanism, using a phosphorylated active-site intermediate. The polypeptide is Nucleoside diphosphate kinase (Vibrio campbellii (strain ATCC BAA-1116)).